Here is a 217-residue protein sequence, read N- to C-terminus: Probable transaldolase (217 aa).

Lys-83 acts as the Schiff-base intermediate with substrate in catalysis.

Belongs to the transaldolase family. Type 3B subfamily.

It is found in the cytoplasm. It catalyses the reaction D-sedoheptulose 7-phosphate + D-glyceraldehyde 3-phosphate = D-erythrose 4-phosphate + beta-D-fructose 6-phosphate. It functions in the pathway carbohydrate degradation; pentose phosphate pathway; D-glyceraldehyde 3-phosphate and beta-D-fructose 6-phosphate from D-ribose 5-phosphate and D-xylulose 5-phosphate (non-oxidative stage): step 2/3. Functionally, transaldolase is important for the balance of metabolites in the pentose-phosphate pathway. This Ruegeria sp. (strain TM1040) (Silicibacter sp.) protein is Probable transaldolase.